A 341-amino-acid chain; its full sequence is NADH-quinone oxidoreductase subunit H (341 aa).

8 consecutive transmembrane segments (helical) span residues 6-26, 76-96, 118-138, 157-177, 198-218, 252-272, 278-298, and 313-333; these read LIVSYLVGFVLLNVLLGLMAY, LVFLVAPLLSFALAPLGAAVI, VAVLYVLALGSVGVYGIILGG, VISYELVLGLSLVGVFILSGS, LPNWYILSQPLAFALFLIAAV, FLAEYINMIVVSLLAATLFLG, FADGVWWLALKALFFLFFYVW, and GLAWKVLLPLALLNIGLTGLV.

It belongs to the complex I subunit 1 family. NDH-1 is composed of 14 different subunits. Subunits NuoA, H, J, K, L, M, N constitute the membrane sector of the complex.

Its subcellular location is the cell membrane. It carries out the reaction a quinone + NADH + 5 H(+)(in) = a quinol + NAD(+) + 4 H(+)(out). Functionally, NDH-1 shuttles electrons from NADH, via FMN and iron-sulfur (Fe-S) centers, to quinones in the respiratory chain. The immediate electron acceptor for the enzyme in this species is believed to be ubiquinone. Couples the redox reaction to proton translocation (for every two electrons transferred, four hydrogen ions are translocated across the cytoplasmic membrane), and thus conserves the redox energy in a proton gradient. This subunit may bind ubiquinone. In Thermomicrobium roseum (strain ATCC 27502 / DSM 5159 / P-2), this protein is NADH-quinone oxidoreductase subunit H.